The sequence spans 518 residues: Glucose-1-phosphate adenylyltransferase large subunit 2, cytosolic (518 aa).

The protein belongs to the bacterial/plant glucose-1-phosphate adenylyltransferase family. As to quaternary structure, heterotetramer composed of two small and two large subunits.

It localises to the cytoplasm. Its subcellular location is the cytosol. It carries out the reaction alpha-D-glucose 1-phosphate + ATP + H(+) = ADP-alpha-D-glucose + diphosphate. It participates in glycan biosynthesis; starch biosynthesis. Activated by 3'phosphoglycerate, inhibited by orthophosphate. Allosteric regulation. Inhibited by inorganic phosphate (Pi). Its function is as follows. Involved in synthesis of starch. Catalyzes the synthesis of ADP-glucose, a molecule that serves as an activated glycosyl donor for alpha-1,4-glucan synthesis. Essential for starch synthesis in seed endosperm. Is essential for both catalytic and allosteric regulatory properties of the cytosolic heterotetramer enzyme. This chain is Glucose-1-phosphate adenylyltransferase large subunit 2, cytosolic, found in Oryza sativa subsp. japonica (Rice).